A 1561-amino-acid chain; its full sequence is Synemin (1561 aa).

The segment at 1–10 (MLSWRLQTGS) is head. Residues 11-49 (EKAELQELNARLYDYVCRVRELERENLLLEEELRSRLSR) form a coil 1A region. Residues 11–320 (EKAELQELNA…YRALLEGESN (310 aa)) form an interaction with DMD and UTRN region. The IF rod domain occupies 11–322 (EKAELQELNA…ALLEGESNPE (312 aa)). Positions 50-58 (EDRWAEDQA) are linker 1. Residues 59–163 (LYAEEARSLR…DLRARAASLT (105 aa)) form a coil 1B region. Positions 164–186 (MHFRARATSPAAPPPRLRDVHDS) are linker 12. Residues 187–300 (YALLVAESWR…LRDYQELLQV (114 aa)) are coil 2. The tract at residues 301–1561 (KTGLSLEVAT…EEEEEGEGWF (1261 aa)) is tail. 2 stretches are compositionally biased toward polar residues: residues 371-390 (SSAS…TTAV) and 401-421 (SRHS…KTIS). Disordered regions lie at residues 371 to 421 (SSAS…KTIS), 549 to 574 (DARK…RSVK), and 591 to 637 (EVST…DSTT). The segment covering 601 to 624 (GRKDVSHSGGREAETKETRFRLDT) has biased composition (basic and acidic residues). Polar residues predominate over residues 625 to 637 (QDTASSLQSDSTT). A Phosphothreonine modification is found at T653. Phosphoserine occurs at positions 655, 778, 780, 1044, 1049, 1077, 1087, 1179, and 1182. 2 disordered regions span residues 1033–1061 (SVVR…VPAG) and 1075–1099 (SPSG…QGPV). The segment covering 1086–1099 (VSPSSDQRVTQGPV) has biased composition (polar residues). The interval 1152-1453 (VSGDFSEAVS…GPKETSFTFQ (302 aa)) is interaction with TLN1 and VCL. The interval 1212 to 1231 (ADISGSGRMPGSERSHTEKE) is disordered. Positions 1222–1231 (GSERSHTEKE) are enriched in basic and acidic residues. Residues 1242-1557 (AQVGGNFATE…DNEEEEEEEG (316 aa)) are interaction with DMD and UTRN. S1425 carries the post-translational modification Phosphoserine. R1481 carries the post-translational modification Omega-N-methylarginine. Residues 1491–1519 (DERVASTGSGASPGDAHQAPGEKGTEQAG) form a disordered region.

The protein belongs to the intermediate filament family. As to quaternary structure, interacts with DES, DMD, DTNA, TLN1, UTRN and VCL. Isoform 1 and isoform 2 interact with GFAP and VIM. As to expression, isoform 2 and isoform 3 are detected in adult skeletal muscle, heart and bladder, whereas isoform 1 is only detected in adult bladder (at protein level).

The protein resides in the cytoplasm. It localises to the cytoskeleton. The protein localises to the cell junction. It is found in the adherens junction. Functionally, type-VI intermediate filament (IF) which plays an important cytoskeletal role within the muscle cell cytoskeleton. It forms heteromeric IFs with desmin and/or vimentin, and via its interaction with cytoskeletal proteins alpha-dystrobrevin, dystrophin, talin-1, utrophin and vinculin, is able to link these heteromeric IFs to adherens-type junctions, such as to the costameres, neuromuscular junctions, and myotendinous junctions within striated muscle cells. In Mus musculus (Mouse), this protein is Synemin.